The following is a 63-amino-acid chain: Conotoxin p5a (63 aa).

A signal peptide spans 1–19; that stretch reads MRCLPVFVILLLLIPSAPC. Positions 20–50 are excised as a propeptide; the sequence is VDAHPKTKDDMPLASFHDNAKGTLQRFWKKR. 2 disulfide bridges follow: Cys-52–Cys-59 and Cys-53–Cys-60. Leu-62 carries the post-translational modification Leucine amide.

In terms of tissue distribution, expressed by the venom duct.

The protein localises to the secreted. Functionally, in vivo, low levels of the peptide injected into male specimens of the Siamese fighting fish causes an immediate aggressive display in this fish in response to their reflection when placed in a mirrored aquarium; High levels of the peptide suppressed this behavior. No effect is observed when injected into mice. The protein is Conotoxin p5a of Conus purpurascens (Purple cone).